Reading from the N-terminus, the 260-residue chain is Hydroxyethylthiazole kinase 1 (260 aa).

A substrate-binding site is contributed by M39. Residues R115 and T160 each coordinate ATP. Residue G187 participates in substrate binding.

Belongs to the Thz kinase family. It depends on Mg(2+) as a cofactor.

It catalyses the reaction 5-(2-hydroxyethyl)-4-methylthiazole + ATP = 4-methyl-5-(2-phosphooxyethyl)-thiazole + ADP + H(+). The protein operates within cofactor biosynthesis; thiamine diphosphate biosynthesis; 4-methyl-5-(2-phosphoethyl)-thiazole from 5-(2-hydroxyethyl)-4-methylthiazole: step 1/1. Functionally, catalyzes the phosphorylation of the hydroxyl group of 4-methyl-5-beta-hydroxyethylthiazole (THZ). The protein is Hydroxyethylthiazole kinase 1 of Streptococcus pneumoniae (strain Taiwan19F-14).